A 239-amino-acid polypeptide reads, in one-letter code: MAATLVAARGTRPAPAWGPEAIAPDWENREVSTGTTIMAVQFDGGVVLGADSRTTTGSYIANRVTDKLTPIHDRIFCCRSGSAADTQAVADAVTYQLGFHSIELNEPPLVHTAASLFKEMCYRYREDLMAGIIIAGWDPQEGGQVYSVPMGGMMVRQPFAIGGSGSSYIYGYVDATYREGMTKEECLQFTANALALAMERDGSSGGVIRLAAIAEPGVERQVLLGDQIPKFTIATLPPL.

The residue at position 2 (Ala2) is an N-acetylalanine. Positions 2–34 are cleaved as a propeptide — removed in mature form; the sequence is AATLVAARGTRPAPAWGPEAIAPDWENREVSTG. Residue Thr35 is the Nucleophile of the active site. At Thr69 the chain carries Phosphothreonine.

The protein belongs to the peptidase T1B family. In terms of assembly, the 26S proteasome consists of a 20S proteasome core and two 19S regulatory subunits. The 20S proteasome core is a barrel-shaped complex made of 28 subunits that are arranged in four stacked rings. The two outer rings are each formed by seven alpha subunits, and the two inner rings are formed by seven beta subunits. The proteolytic activity is exerted by three beta-subunits PSMB5, PSMB6 and PSMB7.

It localises to the cytoplasm. The protein resides in the nucleus. The catalysed reaction is Cleavage of peptide bonds with very broad specificity.. In terms of biological role, component of the 20S core proteasome complex involved in the proteolytic degradation of most intracellular proteins. This complex plays numerous essential roles within the cell by associating with different regulatory particles. Associated with two 19S regulatory particles, forms the 26S proteasome and thus participates in the ATP-dependent degradation of ubiquitinated proteins. The 26S proteasome plays a key role in the maintenance of protein homeostasis by removing misfolded or damaged proteins that could impair cellular functions, and by removing proteins whose functions are no longer required. Associated with the PA200 or PA28, the 20S proteasome mediates ubiquitin-independent protein degradation. This type of proteolysis is required in several pathways including spermatogenesis (20S-PA200 complex) or generation of a subset of MHC class I-presented antigenic peptides (20S-PA28 complex). Within the 20S core complex, PSMB6 displays a peptidylglutamyl-hydrolyzing activity also termed postacidic or caspase-like activity, meaning that the peptides bond hydrolysis occurs directly after acidic residues. The chain is Proteasome subunit beta type-6 (PSMB6) from Bos taurus (Bovine).